The following is a 362-amino-acid chain: UDP-N-acetylglucosamine--N-acetylmuramyl-(pentapeptide) pyrophosphoryl-undecaprenol N-acetylglucosamine transferase (362 aa).

UDP-N-acetyl-alpha-D-glucosamine contacts are provided by residues 10-12 (TGG), N124, S194, I249, and Q294.

The protein belongs to the glycosyltransferase 28 family. MurG subfamily.

It localises to the cell membrane. The enzyme catalyses Mur2Ac(oyl-L-Ala-gamma-D-Glu-L-Lys-D-Ala-D-Ala)-di-trans,octa-cis-undecaprenyl diphosphate + UDP-N-acetyl-alpha-D-glucosamine = beta-D-GlcNAc-(1-&gt;4)-Mur2Ac(oyl-L-Ala-gamma-D-Glu-L-Lys-D-Ala-D-Ala)-di-trans,octa-cis-undecaprenyl diphosphate + UDP + H(+). It functions in the pathway cell wall biogenesis; peptidoglycan biosynthesis. In terms of biological role, cell wall formation. Catalyzes the transfer of a GlcNAc subunit on undecaprenyl-pyrophosphoryl-MurNAc-pentapeptide (lipid intermediate I) to form undecaprenyl-pyrophosphoryl-MurNAc-(pentapeptide)GlcNAc (lipid intermediate II). This Pediococcus pentosaceus (strain ATCC 25745 / CCUG 21536 / LMG 10740 / 183-1w) protein is UDP-N-acetylglucosamine--N-acetylmuramyl-(pentapeptide) pyrophosphoryl-undecaprenol N-acetylglucosamine transferase.